Reading from the N-terminus, the 499-residue chain is Probable cytosol aminopeptidase (499 aa).

2 residues coordinate Mn(2+): Lys269 and Asp274. Lys281 is a catalytic residue. Residues Asp292, Asp351, and Glu353 each coordinate Mn(2+). Arg355 is a catalytic residue.

The protein belongs to the peptidase M17 family. It depends on Mn(2+) as a cofactor.

The protein localises to the cytoplasm. It catalyses the reaction Release of an N-terminal amino acid, Xaa-|-Yaa-, in which Xaa is preferably Leu, but may be other amino acids including Pro although not Arg or Lys, and Yaa may be Pro. Amino acid amides and methyl esters are also readily hydrolyzed, but rates on arylamides are exceedingly low.. It carries out the reaction Release of an N-terminal amino acid, preferentially leucine, but not glutamic or aspartic acids.. Its function is as follows. Presumably involved in the processing and regular turnover of intracellular proteins. Catalyzes the removal of unsubstituted N-terminal amino acids from various peptides. This is Probable cytosol aminopeptidase from Actinobacillus pleuropneumoniae serotype 5b (strain L20).